The chain runs to 317 residues: Cytochrome c biogenesis protein CcsA (317 aa).

A run of 8 helical transmembrane segments spans residues 9-29 (ILTH…LITF), 46-63 (TATA…WVYS), 71-91 (LYES…IFDF), 98-118 (LSAI…SGFL), 143-163 (MVLG…LLVI), 225-245 (IISL…VWAN), 258-273 (ETWA…IYLH), and 286-306 (AIVA…VNLL).

The protein belongs to the CcmF/CycK/Ccl1/NrfE/CcsA family. In terms of assembly, may interact with Ccs1.

It localises to the plastid. The protein resides in the chloroplast thylakoid membrane. Functionally, required during biogenesis of c-type cytochromes (cytochrome c6 and cytochrome f) at the step of heme attachment. The sequence is that of Cytochrome c biogenesis protein CcsA from Citrus sinensis (Sweet orange).